The sequence spans 452 residues: MQRRIMGIETEFGVTCTFHGHRRLSPDEVARYLFRRVVSWGRSSNVFLRNGARLYLDVGSHPEYATAECDNLIQLVTHDRAGERVLEDLLIDAEQRLADEGIGGDIYLFKNNTDSAGNSYGCHENYLIVRAGEFSRISDVLLPFLVTRQLICGAGKVLQTPKAATFCLSQRAEHIWEGVSSATTRSRPIINTRDEPHADAEKYRRLHVIVGDSNMCESTTMLKVGTASLVLEMIEAGVPFRDFSLDNPIRAIREVSHDLTGRRPVRLAGGRQASALDIQREYYSRAVDYLQTREPNSQIEQVVDLWGRQLDAVESQDFAKVDTEIDWVIKRKLFQRYQDRYNMELSDPKISQLDLAYHDIKRGRGVFDLLQRKGLAARITTDEEIDAAVDTPPQTTRAKLRGEFISAAQEAGRDFTVDWVHLKLNDQAQRTVLCKDPFRSVDERVKRLIASM.

Glu-9 serves as a coordination point for Mg(2+). An ATP-binding site is contributed by Arg-53. Mg(2+) is bound at residue Tyr-55. The Proton acceptor role is filled by Asp-57. Glu-63 is a Mg(2+) binding site. ATP-binding residues include Thr-66 and Trp-419.

It belongs to the Pup ligase/Pup deamidase family. Pup-conjugating enzyme subfamily.

It carries out the reaction ATP + [prokaryotic ubiquitin-like protein]-L-glutamate + [protein]-L-lysine = ADP + phosphate + N(6)-([prokaryotic ubiquitin-like protein]-gamma-L-glutamyl)-[protein]-L-lysine.. It participates in protein degradation; proteasomal Pup-dependent pathway. The protein operates within protein modification; protein pupylation. Its function is as follows. Catalyzes the covalent attachment of the prokaryotic ubiquitin-like protein modifier Pup to the proteasomal substrate proteins, thereby targeting them for proteasomal degradation. This tagging system is termed pupylation. The ligation reaction involves the side-chain carboxylate of the C-terminal glutamate of Pup and the side-chain amino group of a substrate lysine. The sequence is that of Pup--protein ligase from Mycobacterium sp. (strain JLS).